Reading from the N-terminus, the 293-residue chain is Formamidopyrimidine-DNA glycosylase (293 aa).

The Schiff-base intermediate with DNA role is filled by proline 2. Residue glutamate 3 is the Proton donor of the active site. The Proton donor; for beta-elimination activity role is filled by lysine 58. Histidine 104, arginine 123, and arginine 166 together coordinate DNA. The FPG-type zinc-finger motif lies at 257–293 (KVYDREGEPCPTLRCKGHVQRIVQAGRSTFFCATCQR). Arginine 283 acts as the Proton donor; for delta-elimination activity in catalysis.

This sequence belongs to the FPG family. In terms of assembly, monomer. The cofactor is Zn(2+).

It carries out the reaction Hydrolysis of DNA containing ring-opened 7-methylguanine residues, releasing 2,6-diamino-4-hydroxy-5-(N-methyl)formamidopyrimidine.. It catalyses the reaction 2'-deoxyribonucleotide-(2'-deoxyribose 5'-phosphate)-2'-deoxyribonucleotide-DNA = a 3'-end 2'-deoxyribonucleotide-(2,3-dehydro-2,3-deoxyribose 5'-phosphate)-DNA + a 5'-end 5'-phospho-2'-deoxyribonucleoside-DNA + H(+). Functionally, involved in base excision repair of DNA damaged by oxidation or by mutagenic agents. Acts as a DNA glycosylase that recognizes and removes damaged bases. Has a preference for oxidized purines, such as 7,8-dihydro-8-oxoguanine (8-oxoG). Has AP (apurinic/apyrimidinic) lyase activity and introduces nicks in the DNA strand. Cleaves the DNA backbone by beta-delta elimination to generate a single-strand break at the site of the removed base with both 3'- and 5'-phosphates. The polypeptide is Formamidopyrimidine-DNA glycosylase (Azorhizobium caulinodans (strain ATCC 43989 / DSM 5975 / JCM 20966 / LMG 6465 / NBRC 14845 / NCIMB 13405 / ORS 571)).